The following is a 1441-amino-acid chain: MFNRFRLVHKQLRLYKNFGLLGQKASVGLTLPIISLSRPYMAYMGTERSVVMITAPATKEFAESSERSNSSKKTTNKEQSDKSAESRMATSGIVESFPTGALVPKAETGVLNFLQKYPEYDGRDVTIAIFDSGVDPRATGLETLCDGKTVKVIERYDCSGCGDVDMKKKVTPDENGNIKGLSGNSLKLSPELMALNTDPEKAVRVGLKSFSDLLPSKVRNNIVAQAKLKHWDKPHKTATANASRKIVEFESQNPGEASKLPWDKKILKENLDFELEMLNSYEKVYGDIKTSYDCILFPTADGWLTIVDTTEQGDLDQALRIGEYSRTHETRNVDDFLSISVNVHDEGNVLEVVGMSSPHGTHVSSIASGNHSSRDVDGVAPNAKIVSMTIGDGRLGSMETGTALVRAMTKVMELCRDGRRIDVINMSYGEHANWSNSGRIGELMNEVVNKYGVVWVASAGNHGPALCTVGTPPDISQPSLIGVGAYVSPQMMEAEYAMREKLPGNVYTWTSRDPCIDGGQGVTVCAPGGAIASVPQFTMSKSQLMNGTSMAAPHVAGAVALLISGLKQQNIEYSPYSIKRAISVTATKLGYVDPFAQGHGLLNVEKAFEHLTEHRQSKDNMLRFSVRVGNNADKGIHLRQGVQRNSIDYNVYIEPIFYNDKEADPKDKFNFNVRLNLIASQPWVQCGAFLDLSYGTRSIAVRVDPTGLQPGVHSAVIRAYDTDCVQKGSLFEIPVTVVQPHVLESDQNTPVFEPASSKGDNSVEFQPNTIQRDFILVPERATWAELRMRITDPNRGEDIGKFFVHTNQLLPKQSCRKLETMKIVSVGSENESIMAFKVKSGRILELCIAKYWSNYGQSHLKYSLRFRGVEAHNPNAYVMHAGRGIHKLEIEALVAEDVQPQLQLKNAEVVLKPTEAKISPLSATRDVIPDGRQVYQNLLAFNLNVAKAADVSIYAPIFNDLLYEAEFESQMWMLFDANKALVATGDAHSHTSFTKLDKGEYTIRLQVRHEKRDLLEKISEANLVASFKLTSPLTLDFYENYNQCIVGGRKYVSSPLRLSTRVLYIAPITQERLTKANLPAQCAWLSGNLVFPQDEVGRRVAQHPFTYILNPAEKKSHTNGSSNGSSAAGSTATAAAVTTANGAKPKAPATPQAATSVTNPAAGDGISVQNDPPVDSSGSPASPKKGKANADDYAESFRDFQCSQIVKCELEMAEKIYNDVVAAHPKHLQANLLLIQNIESNQLKSQLPLTFVNAQKTSPPEAGESADKQKEDQKKVRSALERIVKLADKVIQETDSEALLSYYGLKNDTRADAAKIKTNMDKQKNTLIEALSKKGIAVAKLAVLDDCIKDSLAEINELYTEIIKFVDANDSKAIQFALWHAYAHGHYGRMYKYVVKLIEEKRTRDHFVELAAINGALGHEHIRTVINRMMITAFPSSFRLF.

The disordered stretch occupies residues 62-89 (AESSERSNSSKKTTNKEQSDKSAESRMA). Positions 75 to 85 (TNKEQSDKSAE) are enriched in basic and acidic residues. In terms of domain architecture, Peptidase S8 spans 107-608 (ETGVLNFLQK…HGLLNVEKAF (502 aa)). Catalysis depends on charge relay system residues aspartate 131, histidine 359, and serine 549. Positions 1139 to 1155 (TANGAKPKAPATPQAAT) are enriched in low complexity. 2 disordered regions span residues 1139–1190 (TANG…KANA) and 1255–1274 (QKTS…EDQK). The residue at position 1182 (serine 1182) is a Phosphoserine. A compositionally biased stretch (basic and acidic residues) spans 1265–1274 (SADKQKEDQK).

This sequence belongs to the peptidase S8 family. Homooligomer; forms a complex of 6 MDa probably composed of 40 subunits. Forms a structure consisting of 2 segmented and twisted strands that form a spindle-shaped structure. Each strand is composed of 10 segments (a segment being a homodimer oriented head to head), stacking of these segments leads to the formation of a twisted single strand. 2 strands compose the fully assembled spindle.

The protein localises to the cytoplasm. The catalysed reaction is Release of an N-terminal tripeptide from a polypeptide.. Its activity is regulated as follows. Inhibited by phenylmethanesulfonyl fluoride (PMSF) and butabindide, but not by peptidase inhibitor pepstatin, EDTA, nor bestatin. In terms of biological role, component of the proteolytic cascade acting downstream of the 26S proteasome in the ubiquitin-proteasome pathway. Efficiently cleaves Ala-Ala-Ala-polypeptide and Pro-Pro-Ala-polypeptide, Val-Leu-Lys-polypeptide only at high concentration. Does not cleave Ala-Phe-Pro-polypeptide nor Pro-Leu-Gly-polypeptide. The protein is Tripeptidyl-peptidase 2 (TppII) of Drosophila melanogaster (Fruit fly).